The sequence spans 104 residues: Complex III assembly factor LYRM7 (104 aa).

The stretch at valine 21 to serine 48 forms a coiled coil.

It belongs to the complex I LYR family. In terms of assembly, interacts with UQCRFS1.

The protein resides in the mitochondrion matrix. Assembly factor required for Rieske Fe-S protein UQCRFS1 incorporation into the cytochrome b-c1 (CIII) complex. Functions as a chaperone, binding to this subunit within the mitochondrial matrix and stabilizing it prior to its translocation and insertion into the late CIII dimeric intermediate within the mitochondrial inner membrane. The chain is Complex III assembly factor LYRM7 (lyrm7) from Xenopus laevis (African clawed frog).